Reading from the N-terminus, the 236-residue chain is ATP phosphoribosyltransferase (236 aa).

This sequence belongs to the ATP phosphoribosyltransferase family. Short subfamily. In terms of assembly, heteromultimer composed of HisG and HisZ subunits.

It localises to the cytoplasm. It carries out the reaction 1-(5-phospho-beta-D-ribosyl)-ATP + diphosphate = 5-phospho-alpha-D-ribose 1-diphosphate + ATP. It functions in the pathway amino-acid biosynthesis; L-histidine biosynthesis; L-histidine from 5-phospho-alpha-D-ribose 1-diphosphate: step 1/9. Catalyzes the condensation of ATP and 5-phosphoribose 1-diphosphate to form N'-(5'-phosphoribosyl)-ATP (PR-ATP). Has a crucial role in the pathway because the rate of histidine biosynthesis seems to be controlled primarily by regulation of HisG enzymatic activity. The sequence is that of ATP phosphoribosyltransferase (hisG) from Cereibacter sphaeroides (strain ATCC 17023 / DSM 158 / JCM 6121 / CCUG 31486 / LMG 2827 / NBRC 12203 / NCIMB 8253 / ATH 2.4.1.) (Rhodobacter sphaeroides).